Reading from the N-terminus, the 157-residue chain is 3-hydroxyacyl-[acyl-carrier-protein] dehydratase FabZ (157 aa).

The active site involves His58.

This sequence belongs to the thioester dehydratase family. FabZ subfamily.

Its subcellular location is the cytoplasm. The enzyme catalyses a (3R)-hydroxyacyl-[ACP] = a (2E)-enoyl-[ACP] + H2O. Involved in unsaturated fatty acids biosynthesis. Catalyzes the dehydration of short chain beta-hydroxyacyl-ACPs and long chain saturated and unsaturated beta-hydroxyacyl-ACPs. In Brucella ovis (strain ATCC 25840 / 63/290 / NCTC 10512), this protein is 3-hydroxyacyl-[acyl-carrier-protein] dehydratase FabZ.